A 129-amino-acid chain; its full sequence is Glycophorin-A (129 aa).

The signal sequence occupies residues 1 to 17 (MYEKIVIVLLLSGYIST). Residue Q18 is modified to Pyrrolidone carboxylic acid. Over 18–82 (QDVTEIIPHE…QLVHIFSEPV (65 aa)) the chain is Extracellular. O-linked (GalNAc...) serine glycans are attached at residues S29 and S30. T34 carries O-linked (GalNAc...) threonine glycosylation. S40 carries an O-linked (GalNAc...) serine glycan. O-linked (GalNAc...) threonine glycans are attached at residues T41 and T48. The O-linked (GalNAc...) serine glycan is linked to S56. The helical transmembrane segment at 83 to 103 (IIGIIYAVMLGIIITILSIAF) threads the bilayer. Residues 104–129 (CIGQLTKKSSLPAQVASPEDVDPEVL) lie on the Cytoplasmic side of the membrane.

It belongs to the glycophorin-A family. As to quaternary structure, homodimer. Component of the ankyrin-1 complex in the erythrocyte, composed of ANK1, RHCE, RHAG, SLC4A1, EPB42, GYPA, GYPB and AQP1. Interacts with SLC4A1; a GYPA monomer is bound at each end of the SLC4A1 dimer forming a heterotetramer.

Its subcellular location is the membrane. Its function is as follows. Component of the ankyrin-1 complex, a multiprotein complex involved in the stability and shape of the erythrocyte membrane. Glycophorin A is the major intrinsic membrane protein of the erythrocyte. The N-terminal glycosylated segment, which lies outside the erythrocyte membrane, has MN blood group receptors. Appears to be important for the function of SLC4A1 and is required for high activity of SLC4A1. May be involved in translocation of SLC4A1 to the plasma membrane. The chain is Glycophorin-A from Canis lupus familiaris (Dog).